A 375-amino-acid polypeptide reads, in one-letter code: Actin-related protein T1 (375 aa).

It belongs to the actin family.

It is found in the cytoplasm. The protein resides in the cytoskeleton. Its subcellular location is the nucleus. It localises to the cytoplasmic vesicle. The protein localises to the secretory vesicle. It is found in the acrosome. In terms of biological role, negatively regulates the Hedgehog (SHH) signaling. Binds to the promoter of the SHH signaling mediator, GLI1, and inhibits its expression. This chain is Actin-related protein T1 (ACTRT1), found in Macaca fascicularis (Crab-eating macaque).